We begin with the raw amino-acid sequence, 1578 residues long: Formin-2 (1578 aa).

3 stretches are compositionally biased toward basic and acidic residues: residues 1–17, 26–35, and 57–66; these read MGNQ…DASH, AGPRDAEITK, and TSKKKSKSDS. The tract at residues 1-73 is disordered; it reads MGNQDGKLKR…SDSRASVFSN (73 aa). Phosphoserine is present on Ser89. Disordered stretches follow at residues 208–230, 244–383, and 401–458; these read KLLL…QPGA, EAEK…PSPR, and RQLS…GLSR. Composition is skewed to polar residues over residues 273-282 and 290-300; these read SSGSHLTSET and SAVTDSLSSPA. A compositionally biased stretch (acidic residues) spans 322 to 333; sequence DTDEECEEDAFE. Over residues 351–364 the composition is skewed to basic and acidic residues; that stretch reads ASQRLEKEPEEGMR. Composition is skewed to low complexity over residues 404 to 418 and 427 to 442; these read SSPN…NQSP and SVSR…AAAP. Phosphoserine occurs at positions 459, 489, and 493. Residues 587 to 634 are disordered; the sequence is SMDYSEGQFPRREPSMWPSSKLPEEEPSPKDVDTEPKSSILESPKKCS. Positions 608-622 are enriched in basic and acidic residues; it reads LPEEEPSPKDVDTEP. A coiled-coil region spans residues 643-683; that stretch reads DVKSEGQATVIQQLEQTIEDLRTKIAELEKQYPALDLEGPR. 3 disordered regions span residues 714 to 765, 786 to 836, and 880 to 944; these read RTLE…SGPQ, DAQQ…GNNC, and PALQ…MGIS. Residues 735–1124 enclose the FH1 domain; that stretch reads PPPKAPPEGL…GCGFLFPPLP (390 aa). Residues 786 to 795 show a composition bias toward polar residues; the sequence is DAQQIQSASQ. Residues 803-817 show a composition bias toward low complexity; the sequence is LGSDSQGQPSQPSLH. Positions 818–827 are enriched in basic and acidic residues; the sequence is TESETSHEHS. A compositionally biased stretch (pro residues) spans 893–944; it reads LPAPPQPPPLPGLGVPPPPPAPPLPGMGIPPPPPLPGMGIPPPPPLPGMGIS. Repeat copies occupy residues 919 to 929, 930 to 940, 941 to 951, 952 to 962, 963 to 973, 974 to 984, 985 to 995, 996 to 1006, 1007 to 1017, 1018 to 1028, 1029 to 1039, and 1040 to 1050. Residues 919-1039 form a 12 X 11 AA tandem repeats of [MV]-G-I-P-P-P-P-P-L-P-G region; the sequence is MGIPPPPPLP…GIPPPPPLPG (121 aa). Over residues 1037 to 1097 the composition is skewed to pro residues; sequence LPGVGIPPPP…PPPPLLPGSG (61 aa). The tract at residues 1037-1108 is disordered; the sequence is LPGVGIPPPP…PHSSQVGSST (72 aa). The FH2 domain occupies 1139 to 1554; that stretch reads RKQLIEPCRP…KEAEEVCRQK (416 aa). Residues 1419-1455 adopt a coiled-coil conformation; the sequence is QELFQASQMKFEDFQKDLRKLKKDLKACEAEAGKVYQ. The segment at 1571 to 1578 is important for interaction with SPIRE1; the sequence is KAKISMKT.

The protein belongs to the formin homology family. Cappuccino subfamily. In terms of assembly, interacts with SPIRE1. Binds actin. Interacts with CDKN1A. As to expression, detected in brain and in oocytes (at protein level). Expressed almost exclusively in the developing and mature central nervous system. Detected in oocytes.

The protein resides in the cytoplasm. Its subcellular location is the cytoskeleton. It localises to the cytosol. The protein localises to the perinuclear region. It is found in the nucleus. The protein resides in the nucleolus. Its subcellular location is the cell membrane. It localises to the cell cortex. The protein localises to the cytoplasmic vesicle membrane. Its function is as follows. Actin-binding protein that is involved in actin cytoskeleton assembly and reorganization. Acts as an actin nucleation factor and promotes assembly of actin filaments together with SPIRE1 and SPIRE2. Involved in intracellular vesicle transport along actin fibers, providing a novel link between actin cytoskeleton dynamics and intracellular transport. Required for asymmetric spindle positioning, asymmetric oocyte division and polar body extrusion during female germ cell meiosis. Plays a role in responses to DNA damage, cellular stress and hypoxia by protecting CDKN1A against degradation, and thereby plays a role in stress-induced cell cycle arrest. Also acts in the nucleus: together with SPIRE1 and SPIRE2, promotes assembly of nuclear actin filaments in response to DNA damage in order to facilitate movement of chromatin and repair factors after DNA damage. Protects cells against apoptosis by protecting CDKN1A against degradation. The sequence is that of Formin-2 (Fmn2) from Mus musculus (Mouse).